The primary structure comprises 356 residues: Biotin synthase (356 aa).

Residues 1 to 28 (MTIQANVPTGDETSDEASRQTSNEASSE) form a disordered region. The Radical SAM core domain occupies 77–302 (EDVEVEGIIS…RTVLRYAGGR (226 aa)). [4Fe-4S] cluster-binding residues include Cys92, Cys96, and Cys99. [2Fe-2S] cluster contacts are provided by Cys135, Cys168, Cys227, and Arg297.

The protein belongs to the radical SAM superfamily. Biotin synthase family. Homodimer. Requires [4Fe-4S] cluster as cofactor. It depends on [2Fe-2S] cluster as a cofactor.

The catalysed reaction is (4R,5S)-dethiobiotin + (sulfur carrier)-SH + 2 reduced [2Fe-2S]-[ferredoxin] + 2 S-adenosyl-L-methionine = (sulfur carrier)-H + biotin + 2 5'-deoxyadenosine + 2 L-methionine + 2 oxidized [2Fe-2S]-[ferredoxin]. It participates in cofactor biosynthesis; biotin biosynthesis; biotin from 7,8-diaminononanoate: step 2/2. Catalyzes the conversion of dethiobiotin (DTB) to biotin by the insertion of a sulfur atom into dethiobiotin via a radical-based mechanism. The polypeptide is Biotin synthase (Arthrobacter sp. (strain FB24)).